A 477-amino-acid polypeptide reads, in one-letter code: D(1B) dopamine receptor (477 aa).

At M1–S39 the chain is on the extracellular side. N7 is a glycosylation site (N-linked (GlcNAc...) asparagine). The helical transmembrane segment at Q40 to V66 threads the bilayer. Residues R67–N77 lie on the Cytoplasmic side of the membrane. A helical transmembrane segment spans residues V78 to A104. The Extracellular segment spans residues G105–D114. A disulfide bridge links C113 with C217. Residues V115 to V136 traverse the membrane as a helical segment. Over D137 to L158 the chain is Cytoplasmic. Residues V159–W180 traverse the membrane as a helical segment. At H181–R223 the chain is on the extracellular side. N-linked (GlcNAc...) asparagine glycosylation occurs at N222. The helical transmembrane segment at T224–T246 threads the bilayer. Residues R247–K296 are Cytoplasmic-facing. A helical transmembrane segment spans residues T297–P320. Residues F321–T340 lie on the Extracellular side of the membrane. Residues F341–A360 traverse the membrane as a helical segment. Over F361 to H477 the chain is Cytoplasmic. C375 carries S-palmitoyl cysteine lipidation.

It belongs to the G-protein coupled receptor 1 family. In terms of tissue distribution, neuron-specific, localized primarily within limbic regions of the brain.

It localises to the cell membrane. Dopamine receptor whose activity is mediated by G proteins which activate adenylyl cyclase. This Homo sapiens (Human) protein is D(1B) dopamine receptor (DRD5).